The chain runs to 129 residues: Small ribosomal subunit protein uS11 (129 aa).

It belongs to the universal ribosomal protein uS11 family. In terms of assembly, part of the 30S ribosomal subunit. Interacts with proteins S7 and S18. Binds to IF-3.

Its function is as follows. Located on the platform of the 30S subunit, it bridges several disparate RNA helices of the 16S rRNA. Forms part of the Shine-Dalgarno cleft in the 70S ribosome. The polypeptide is Small ribosomal subunit protein uS11 (Staphylococcus saprophyticus subsp. saprophyticus (strain ATCC 15305 / DSM 20229 / NCIMB 8711 / NCTC 7292 / S-41)).